A 281-amino-acid chain; its full sequence is F-actin-capping protein subunit alpha (281 aa).

The protein belongs to the F-actin-capping protein alpha subunit family. As to quaternary structure, component of the F-actin capping complex, composed of a heterodimer of an alpha and a beta subunit.

It is found in the cytoplasm. Its subcellular location is the cytoskeleton. F-actin-capping proteins bind in a Ca(2+)-independent manner to the fast growing ends of actin filaments (barbed end) thereby blocking the exchange of subunits at these ends. Unlike other capping proteins (such as gelsolin and severin), these proteins do not sever actin filaments. The polypeptide is F-actin-capping protein subunit alpha (acpB) (Dictyostelium discoideum (Social amoeba)).